We begin with the raw amino-acid sequence, 331 residues long: Benzylsuccinate synthase activating enzyme (331 aa).

Residues 15–315 (QDGPGIRTTI…VTIGGIVGIA (301 aa)) form the Radical SAM core domain. 11 residues coordinate [4Fe-4S] cluster: Cys29, Cys33, Cys36, Cys55, Cys58, Cys61, Cys65, Cys89, Cys92, Cys95, and Cys99. 35–37 (WCH) serves as a coordination point for S-adenosyl-L-methionine. 4Fe-4S ferredoxin-type domains follow at residues 46 to 75 (QEFY…LVRN) and 80 to 109 (TIVQ…IVGQ). S-adenosyl-L-methionine-binding positions include Gly139, 189-191 (DLK), and His263.

It belongs to the organic radical-activating enzymes family. [4Fe-4S] cluster serves as cofactor.

The enzyme catalyses glycyl-[protein] + reduced [flavodoxin] + S-adenosyl-L-methionine = glycin-2-yl radical-[protein] + semiquinone [flavodoxin] + 5'-deoxyadenosine + L-methionine + H(+). It functions in the pathway xenobiotic degradation; toluene degradation [regulation]. In terms of biological role, activation of benzylsuccinate synthase under anaerobic conditions by generation of an organic free radical, using S-adenosylmethionine and reduced flavodoxin as cosubstrates to produce 5'-deoxy-adenosine. This chain is Benzylsuccinate synthase activating enzyme (bssD), found in Thauera aromatica.